The following is a 367-amino-acid chain: UDP-N-acetylglucosamine--N-acetylmuramyl-(pentapeptide) pyrophosphoryl-undecaprenol N-acetylglucosamine transferase (367 aa).

UDP-N-acetyl-alpha-D-glucosamine is bound by residues 15 to 17 (TGG), Asn126, Arg169, Ser197, and Gln298.

The protein belongs to the glycosyltransferase 28 family. MurG subfamily.

The protein localises to the cell inner membrane. The enzyme catalyses di-trans,octa-cis-undecaprenyl diphospho-N-acetyl-alpha-D-muramoyl-L-alanyl-D-glutamyl-meso-2,6-diaminopimeloyl-D-alanyl-D-alanine + UDP-N-acetyl-alpha-D-glucosamine = di-trans,octa-cis-undecaprenyl diphospho-[N-acetyl-alpha-D-glucosaminyl-(1-&gt;4)]-N-acetyl-alpha-D-muramoyl-L-alanyl-D-glutamyl-meso-2,6-diaminopimeloyl-D-alanyl-D-alanine + UDP + H(+). The protein operates within cell wall biogenesis; peptidoglycan biosynthesis. Functionally, cell wall formation. Catalyzes the transfer of a GlcNAc subunit on undecaprenyl-pyrophosphoryl-MurNAc-pentapeptide (lipid intermediate I) to form undecaprenyl-pyrophosphoryl-MurNAc-(pentapeptide)GlcNAc (lipid intermediate II). The protein is UDP-N-acetylglucosamine--N-acetylmuramyl-(pentapeptide) pyrophosphoryl-undecaprenol N-acetylglucosamine transferase of Bradyrhizobium sp. (strain ORS 278).